Consider the following 128-residue polypeptide: Cytochrome c-type biogenesis protein CcmE (128 aa).

The Cytoplasmic portion of the chain corresponds to 1–8 (MQKRVRNR). The chain crosses the membrane as a helical; Signal-anchor for type II membrane protein span at residues 9–29 (LITIIICFCSACLGISIILYN). At 30–128 (LEKNIVFFLP…KHDENYRPPQ (99 aa)) the chain is on the periplasmic side. Residues histidine 120 and tyrosine 124 each contribute to the heme site.

It belongs to the CcmE/CycJ family.

It is found in the cell inner membrane. Functionally, heme chaperone required for the biogenesis of c-type cytochromes. Transiently binds heme delivered by CcmC and transfers the heme to apo-cytochromes in a process facilitated by CcmF and CcmH. The chain is Cytochrome c-type biogenesis protein CcmE from Rickettsia conorii (strain ATCC VR-613 / Malish 7).